A 544-amino-acid chain; its full sequence is CTP synthase (544 aa).

The segment at 1–266 (MTRFVFITGG…DREVLRHFNL (266 aa)) is amidoligase domain. CTP is bound at residue Ser-13. Ser-13 is a binding site for UTP. 14–19 (SLGKGI) provides a ligand contact to ATP. Tyr-54 contributes to the L-glutamine binding site. Residue Asp-71 coordinates ATP. Residues Asp-71 and Glu-140 each coordinate Mg(2+). CTP contacts are provided by residues 147 to 149 (DIE), 187 to 192 (KTKPTQ), and Lys-223. UTP-binding positions include 187-192 (KTKPTQ) and Lys-223. The Glutamine amidotransferase type-1 domain occupies 292–543 (KIAIVGKYIT…VAAAVRQARL (252 aa)). Position 354 (Gly-354) interacts with L-glutamine. Catalysis depends on Cys-381, which acts as the Nucleophile; for glutamine hydrolysis. Residues 382–385 (FGMQ), Glu-405, and Arg-471 contribute to the L-glutamine site. Residues His-516 and Glu-518 contribute to the active site.

This sequence belongs to the CTP synthase family. Homotetramer.

The catalysed reaction is UTP + L-glutamine + ATP + H2O = CTP + L-glutamate + ADP + phosphate + 2 H(+). It catalyses the reaction L-glutamine + H2O = L-glutamate + NH4(+). It carries out the reaction UTP + NH4(+) + ATP = CTP + ADP + phosphate + 2 H(+). It participates in pyrimidine metabolism; CTP biosynthesis via de novo pathway; CTP from UDP: step 2/2. Its activity is regulated as follows. Allosterically activated by GTP, when glutamine is the substrate; GTP has no effect on the reaction when ammonia is the substrate. The allosteric effector GTP functions by stabilizing the protein conformation that binds the tetrahedral intermediate(s) formed during glutamine hydrolysis. Inhibited by the product CTP, via allosteric rather than competitive inhibition. Functionally, catalyzes the ATP-dependent amination of UTP to CTP with either L-glutamine or ammonia as the source of nitrogen. Regulates intracellular CTP levels through interactions with the four ribonucleotide triphosphates. The chain is CTP synthase from Granulibacter bethesdensis (strain ATCC BAA-1260 / CGDNIH1).